A 146-amino-acid polypeptide reads, in one-letter code: Putative pre-16S rRNA nuclease (146 aa).

This sequence belongs to the YqgF nuclease family.

It is found in the cytoplasm. Could be a nuclease involved in processing of the 5'-end of pre-16S rRNA. The sequence is that of Putative pre-16S rRNA nuclease from Pseudomonas savastanoi pv. phaseolicola (strain 1448A / Race 6) (Pseudomonas syringae pv. phaseolicola (strain 1448A / Race 6)).